A 560-amino-acid chain; its full sequence is Probable sulfate transporter Rv1739c (560 aa).

The tract at residues Met1–Gly436 is required for sulfate transport in E.coli. Helical transmembrane passes span Val29–Val49, Gly51–Leu71, Ile79–Gly99, Ala105–Ala125, Val138–Ile158, Trp184–Ala204, Ala207–Asp227, Ala256–Ala276, Leu333–Phe353, Ile355–Phe375, and Ala394–Leu414. The region spanning Asp442 to Phe557 is the STAS domain.

Belongs to the SLC26A/SulP transporter (TC 2.A.53) family.

It localises to the cell membrane. Its function is as follows. Expression in E.coli induces sulfate uptake during early- to mid-log phase growth. Uptake is maximal at pH 6.0, is sulfate-specific, requires E.coli CysA and the transmembrane segment but not the STAS domain of the protein. In Mycobacterium tuberculosis (strain ATCC 25618 / H37Rv), this protein is Probable sulfate transporter Rv1739c.